A 464-amino-acid polypeptide reads, in one-letter code: L-cysteine:1D-myo-inositol 2-amino-2-deoxy-alpha-D-glucopyranoside ligase (464 aa).

Residue C67 coordinates Zn(2+). Residues 67 to 70, T82, and 105 to 107 each bind L-cysteinyl-5'-AMP; these read CGIT and NVT. The short motif at 69-79 is the 'HIGH' region element; sequence ITPYDATHLGH. Residues 207 to 212 carry the 'ERGGDP' region motif; it reads ERGGDP. W247 contacts L-cysteinyl-5'-AMP. Position 251 (C251) interacts with Zn(2+). Residue 269–271 coordinates L-cysteinyl-5'-AMP; the sequence is GTD. H276 lines the Zn(2+) pocket. An L-cysteinyl-5'-AMP-binding site is contributed by V303. The short motif at 309–313 is the 'KMSKS' region element; that stretch reads KMSKS. The interval 410-435 is disordered; the sequence is AGGSAGAGPDPTHQGGPVRGSGGDVP.

Belongs to the class-I aminoacyl-tRNA synthetase family. MshC subfamily. Monomer. Zn(2+) serves as cofactor.

The enzyme catalyses 1D-myo-inositol 2-amino-2-deoxy-alpha-D-glucopyranoside + L-cysteine + ATP = 1D-myo-inositol 2-(L-cysteinylamino)-2-deoxy-alpha-D-glucopyranoside + AMP + diphosphate + H(+). Catalyzes the ATP-dependent condensation of GlcN-Ins and L-cysteine to form L-Cys-GlcN-Ins. This chain is L-cysteine:1D-myo-inositol 2-amino-2-deoxy-alpha-D-glucopyranoside ligase, found in Frankia casuarinae (strain DSM 45818 / CECT 9043 / HFP020203 / CcI3).